Consider the following 87-residue polypeptide: Phytosulfokines 2 (87 aa).

An N-terminal signal peptide occupies residues 1 to 22 (MANVSALLTIALLLCSTLMCTA). A propeptide spanning residues 23-77 (RPEPAISISITTAADPCNMEKKIEGKLDDMHMVDENCGADDEDCLMRRTLVAHTD) is cleaved from the precursor. Y78 and Y80 each carry sulfotyrosine. Positions 83–87 (KKKHP) are excised as a propeptide.

Belongs to the phytosulfokine family. Post-translationally, sulfation is important for activity and for the binding to a putative membrane receptor. In terms of processing, PSK-beta is an enzymatic derivative of PSK-alpha. In terms of tissue distribution, expressed in stems, roots and leaves.

The protein localises to the secreted. Promotes plant cell differentiation, organogenesis and somatic embryogenesis as well as cell proliferation. The protein is Phytosulfokines 2 (PSK2) of Arabidopsis thaliana (Mouse-ear cress).